Here is a 191-residue protein sequence, read N- to C-terminus: Protein Ves (191 aa).

The protein belongs to the Ves family.

The polypeptide is Protein Ves (Escherichia coli (strain 55989 / EAEC)).